Consider the following 100-residue polypeptide: Large ribosomal subunit protein bL27 (100 aa).

The propeptide occupies 1 to 13; that stretch reads MNKLYWLTDLQLF. The span at 18–29 shows a compositional bias: basic and acidic residues; the sequence is GVDSSKNGRDSN. A disordered region spans residues 18–39; that stretch reads GVDSSKNGRDSNPKYLGAKLGD.

Belongs to the bacterial ribosomal protein bL27 family. The N-terminus is cleaved by ribosomal processing cysteine protease Prp.

The sequence is that of Large ribosomal subunit protein bL27 from Ureaplasma urealyticum serovar 10 (strain ATCC 33699 / Western).